The sequence spans 471 residues: UDP-N-acetylmuramate--L-alanine ligase (471 aa).

Residue 114 to 120 participates in ATP binding; the sequence is GTHGKTT.

The protein belongs to the MurCDEF family.

The protein localises to the cytoplasm. The enzyme catalyses UDP-N-acetyl-alpha-D-muramate + L-alanine + ATP = UDP-N-acetyl-alpha-D-muramoyl-L-alanine + ADP + phosphate + H(+). It participates in cell wall biogenesis; peptidoglycan biosynthesis. Its function is as follows. Cell wall formation. The polypeptide is UDP-N-acetylmuramate--L-alanine ligase (Allorhizobium ampelinum (strain ATCC BAA-846 / DSM 112012 / S4) (Agrobacterium vitis (strain S4))).